Here is a 223-residue protein sequence, read N- to C-terminus: dITP/XTP pyrophosphatase (223 aa).

9–14 contributes to the substrate binding site; that stretch reads TTNQNK. The active-site Proton acceptor is D71. Position 71 (D71) interacts with Mg(2+). Residues S72, 152 to 155, K175, and 180 to 181 contribute to the substrate site; these read FGYD and HR. Positions 203-223 are disordered; the sequence is LSEEKPAKPDHSEFEGNDWSK.

Belongs to the HAM1 NTPase family. In terms of assembly, homodimer. The cofactor is Mg(2+).

It carries out the reaction XTP + H2O = XMP + diphosphate + H(+). It catalyses the reaction dITP + H2O = dIMP + diphosphate + H(+). The catalysed reaction is ITP + H2O = IMP + diphosphate + H(+). Its function is as follows. Pyrophosphatase that catalyzes the hydrolysis of nucleoside triphosphates to their monophosphate derivatives, with a high preference for the non-canonical purine nucleotides XTP (xanthosine triphosphate), dITP (deoxyinosine triphosphate) and ITP. Seems to function as a house-cleaning enzyme that removes non-canonical purine nucleotides from the nucleotide pool, thus preventing their incorporation into DNA/RNA and avoiding chromosomal lesions. This Desulfotalea psychrophila (strain LSv54 / DSM 12343) protein is dITP/XTP pyrophosphatase.